A 472-amino-acid polypeptide reads, in one-letter code: Tryptophanase (472 aa).

Lysine 270 is modified (N6-(pyridoxal phosphate)lysine).

This sequence belongs to the beta-eliminating lyase family. In terms of assembly, homotetramer. Pyridoxal 5'-phosphate serves as cofactor.

It catalyses the reaction L-tryptophan + H2O = indole + pyruvate + NH4(+). Its pathway is amino-acid degradation; L-tryptophan degradation via pyruvate pathway; indole and pyruvate from L-tryptophan: step 1/1. This chain is Tryptophanase, found in Haemophilus influenzae (strain 86-028NP).